A 138-amino-acid chain; its full sequence is Unique cartilage matrix-associated protein (138 aa).

An N-terminal signal peptide occupies residues 1–27; it reads MSWRRVILLSSLLALVLLCMLQEGTSA. A propeptide spans 28–64 (ucma-N); it reads SVGSRQAAAEGVQEGVKQKIFMQESDASNFLKRRGKR. A disordered region spans residues 58–78; that stretch reads LKRRGKRSPKSRDEVNAENRQ. Residues 67–78 are compositionally biased toward basic and acidic residues; sequence KSRDEVNAENRQ. A coiled-coil region spans residues 78–122; the sequence is QRLRDDELRREYYEEQRNEFENFVEEQRDEQEERTREAVEQWRQW.

Belongs to the UCMA family. In terms of processing, proteolytically cleaved by a furin-like convertase to generate a persistent C-terminal fragment found in almost the entire cartilage matrix, and affecting osteoblast differentiation. Sulfated on one or two tyrosine residues within the tryptic peptide 121-135. As to expression, predominantly expressed in resting chondrocytes.

It localises to the secreted. It is found in the extracellular space. The protein localises to the extracellular matrix. The protein resides in the golgi apparatus. Its subcellular location is the cytoplasm. It localises to the cytoskeleton. May be involved in the negative control of osteogenic differentiation of osteochondrogenic precursor cells in peripheral zones of fetal cartilage and at the cartilage-bone interface. This Mus musculus (Mouse) protein is Unique cartilage matrix-associated protein (Ucma).